The chain runs to 192 residues: UPF0301 protein Bcen_0382 (192 aa).

Belongs to the UPF0301 (AlgH) family.

This Burkholderia orbicola (strain AU 1054) protein is UPF0301 protein Bcen_0382.